A 454-amino-acid polypeptide reads, in one-letter code: Putative serine/threonine-protein phosphatase C27B7.6 (454 aa).

Mn(2+) contacts are provided by Asp65, His67, Asp93, and Asn125. Residue His126 is the Proton donor of the active site. Positions 174 and 252 each coordinate Mn(2+). Positions 414-454 (RKKLGMTTSTTPPPPRTPSPDAPLAQSPPIPRSPPSSTENA) are disordered. Positions 424 to 447 (TPPPPRTPSPDAPLAQSPPIPRSP) are enriched in pro residues.

It belongs to the PPP phosphatase family. PP-1 subfamily. Mn(2+) serves as cofactor.

It catalyses the reaction O-phospho-L-seryl-[protein] + H2O = L-seryl-[protein] + phosphate. The catalysed reaction is O-phospho-L-threonyl-[protein] + H2O = L-threonyl-[protein] + phosphate. This Caenorhabditis elegans protein is Putative serine/threonine-protein phosphatase C27B7.6.